Consider the following 276-residue polypeptide: Elongation factor Ts (276 aa).

The tract at residues 76 to 79 (TDFV) is involved in Mg(2+) ion dislocation from EF-Tu.

This sequence belongs to the EF-Ts family.

Its subcellular location is the cytoplasm. Its function is as follows. Associates with the EF-Tu.GDP complex and induces the exchange of GDP to GTP. It remains bound to the aminoacyl-tRNA.EF-Tu.GTP complex up to the GTP hydrolysis stage on the ribosome. The chain is Elongation factor Ts from Mycobacterium leprae (strain Br4923).